We begin with the raw amino-acid sequence, 434 residues long: Serine hydroxymethyltransferase (434 aa).

Residues L124 and 128 to 130 contribute to the (6S)-5,6,7,8-tetrahydrofolate site; that span reads GHL. An N6-(pyridoxal phosphate)lysine modification is found at K233. Position 249 (E249) interacts with (6S)-5,6,7,8-tetrahydrofolate.

This sequence belongs to the SHMT family. Homodimer. Pyridoxal 5'-phosphate serves as cofactor.

Its subcellular location is the cytoplasm. The catalysed reaction is (6R)-5,10-methylene-5,6,7,8-tetrahydrofolate + glycine + H2O = (6S)-5,6,7,8-tetrahydrofolate + L-serine. It participates in one-carbon metabolism; tetrahydrofolate interconversion. Its pathway is amino-acid biosynthesis; glycine biosynthesis; glycine from L-serine: step 1/1. Its function is as follows. Catalyzes the reversible interconversion of serine and glycine with tetrahydrofolate (THF) serving as the one-carbon carrier. This reaction serves as the major source of one-carbon groups required for the biosynthesis of purines, thymidylate, methionine, and other important biomolecules. Also exhibits THF-independent aldolase activity toward beta-hydroxyamino acids, producing glycine and aldehydes, via a retro-aldol mechanism. The sequence is that of Serine hydroxymethyltransferase from Synechococcus sp. (strain JA-3-3Ab) (Cyanobacteria bacterium Yellowstone A-Prime).